Here is a 299-residue protein sequence, read N- to C-terminus: MIKMIESYLKAGKIVSKVRREAAGIIRDGLPIIELVNYVEDRIIEEGGRPAFPCNVSVNEVTAHYTSPPGDDSVIGDGDLVKLDLGAHVDGFIADTAITVPVGDVDDKCHQMMDAAREALENAISTIRAGVEVGEIGRVIEETIHSHGMNPVSNLTGHSMERWILHSGLSIPNINERNTHQLEEGDVLAIEPFATDGVGLVTDMPQTYIFRFLRERPLRLVHARRVLGKIREEYHALPFAQRWLEEYFDAKRLNASMRMLIQSRAIYPYHVLREKSGAMVAQWEHTVIVEEDGCTVITE.

Residue histidine 64 participates in substrate binding. Aspartate 84, aspartate 95, and histidine 158 together coordinate a divalent metal cation. Position 166 (histidine 166) interacts with substrate. The a divalent metal cation site is built by glutamate 191 and glutamate 284.

Belongs to the peptidase M24A family. Methionine aminopeptidase archaeal type 2 subfamily. Monomer. It depends on Co(2+) as a cofactor. Requires Zn(2+) as cofactor. Mn(2+) serves as cofactor. The cofactor is Fe(2+).

It catalyses the reaction Release of N-terminal amino acids, preferentially methionine, from peptides and arylamides.. Its function is as follows. Removes the N-terminal methionine from nascent proteins. The N-terminal methionine is often cleaved when the second residue in the primary sequence is small and uncharged (Met-Ala-, Cys, Gly, Pro, Ser, Thr, or Val). The protein is Methionine aminopeptidase of Methanothermobacter thermautotrophicus (strain ATCC 29096 / DSM 1053 / JCM 10044 / NBRC 100330 / Delta H) (Methanobacterium thermoautotrophicum).